A 164-amino-acid chain; its full sequence is 3-hydroxyacyl-[acyl-carrier-protein] dehydratase FabZ (164 aa).

H61 is an active-site residue.

Belongs to the thioester dehydratase family. FabZ subfamily.

The protein resides in the cytoplasm. The catalysed reaction is a (3R)-hydroxyacyl-[ACP] = a (2E)-enoyl-[ACP] + H2O. Involved in unsaturated fatty acids biosynthesis. Catalyzes the dehydration of short chain beta-hydroxyacyl-ACPs and long chain saturated and unsaturated beta-hydroxyacyl-ACPs. In Ralstonia nicotianae (strain ATCC BAA-1114 / GMI1000) (Ralstonia solanacearum), this protein is 3-hydroxyacyl-[acyl-carrier-protein] dehydratase FabZ.